A 275-amino-acid polypeptide reads, in one-letter code: Rhamnulose-1-phosphate aldolase (275 aa).

Glutamate 117 is a catalytic residue. Residues histidine 141, histidine 143, and histidine 212 each coordinate Zn(2+).

The protein belongs to the aldolase class II family. RhaD subfamily. In terms of assembly, homotetramer. Requires Zn(2+) as cofactor.

Its subcellular location is the cytoplasm. The catalysed reaction is L-rhamnulose 1-phosphate = (S)-lactaldehyde + dihydroxyacetone phosphate. Its pathway is carbohydrate degradation; L-rhamnose degradation; glycerone phosphate from L-rhamnose: step 3/3. Its function is as follows. Catalyzes the reversible cleavage of L-rhamnulose-1-phosphate to dihydroxyacetone phosphate (DHAP) and L-lactaldehyde. The chain is Rhamnulose-1-phosphate aldolase from Citrobacter koseri (strain ATCC BAA-895 / CDC 4225-83 / SGSC4696).